The chain runs to 681 residues: Pumilio domain-containing protein C6G9.14 (681 aa).

Disordered regions lie at residues 180–210 and 273–322; these read RPGL…PGLI and ASTA…NVPS. Composition is skewed to low complexity over residues 187 to 210 and 273 to 286; these read TPGP…PGLI and ASTA…SSGS. One can recognise a PUM-HD domain in the interval 319–659; sequence NVPSLISDDP…RILSKLERRH (341 aa). Pumilio repeat units follow at residues 342–378, 379–414, 415–451, 452–487, 488–523, 524–559, 560–595, and 596–633; these read SLQN…AVFA, ETHP…TFIQ, IIAP…CIVN, ALRP…FIFD, AICE…QLVE, HIVP…AIIS, YFLY…KLIS, and ELMD…ELVE. Residues 656–666 are compositionally biased toward basic and acidic residues; it reads ERRHPSSKEKP. The interval 656–681 is disordered; sequence ERRHPSSKEKPIVYSNSERVNTSSSA. Residues 669-681 are compositionally biased toward polar residues; it reads YSNSERVNTSSSA.

The sequence is that of Pumilio domain-containing protein C6G9.14 from Schizosaccharomyces pombe (strain 972 / ATCC 24843) (Fission yeast).